The following is a 193-amino-acid chain: Ribonuclease HII (193 aa).

Residues 15–193 enclose the RNase H type-2 domain; it reads YIVAGIDEAG…PYHRRSFKCC (179 aa). Residues D21, E22, and D112 each coordinate a divalent metal cation.

The protein belongs to the RNase HII family. It depends on Mn(2+) as a cofactor. Mg(2+) is required as a cofactor.

The protein resides in the cytoplasm. The enzyme catalyses Endonucleolytic cleavage to 5'-phosphomonoester.. Endonuclease that specifically degrades the RNA of RNA-DNA hybrids. This is Ribonuclease HII from Rickettsia felis (strain ATCC VR-1525 / URRWXCal2) (Rickettsia azadi).